The following is a 2784-amino-acid chain: Cilia- and flagella-associated protein 46 (2784 aa).

The stretch at 129–162 (GLEVAAANQPRYQFLVYNASVHHWRVVAPLHRDG) is one TPR 1 repeat. Residues 242-268 (TAAAAKLTELQKDVARLQVHLATLAAA) adopt a coiled-coil conformation. The TPR 2 repeat unit spans residues 401–434 (SLAPVVVAAHVKALEQLEDVLTTFTKLADVEGIH). 2 disordered regions span residues 543 to 562 (SAEPANPEEEAVSLIERSKE) and 581 to 607 (RDLPHPPPPAPTDPPGPDRDAAHAAAR). The span at 585–595 (HPPPPAPTDPP) shows a compositional bias: pro residues. A coiled-coil region spans residues 644–665 (AVDREMVLLQAQLAHYEAEAAI). The disordered stretch occupies residues 670–697 (RRRADISPPTRPSPPEVDGEGVRQPPAT). The TPR 3 repeat unit spans residues 708 to 743 (ASVRSMRGAMSVNEPWLTLNNAVQLYNAALPLMQQH). 2 disordered regions span residues 799-837 (DAGQELEDDDDEDSLDEDGNPPPAGDAGPHFNRRSPAYK) and 929-954 (RVNEEKQPAGAGAEKGGGDKGRKPHG). Residues 802–817 (QELEDDDDEDSLDEDG) are compositionally biased toward acidic residues. The TPR 4 repeat unit spans residues 976–1009 (LELWAKMARAVADAGVWPAALECSAAALAALPGA). Acidic residues predominate over residues 1275 to 1288 (TGDLDGDGTDDEDD). Disordered stretches follow at residues 1275–1351 (TGDL…RVPE) and 1640–1673 (AAGGGRGGRESPSPHDDGIHYIGGPAPGDSHGQL). Positions 1298–1311 (SGGGSSSGRAGGGF) are enriched in gly residues. Residues 1646–1658 (GGRESPSPHDDGI) are compositionally biased toward basic and acidic residues. TPR repeat units lie at residues 1712–1745 (HDVWLKKGDYLLRRGHYAAARQLLSRARAHAADC) and 1854–1886 (MEMLRGQGVSTWRKSYDGAVTLVNQAIMALAAR). Residues 1961-1984 (RLAEVQLAAAEERERLAGADREKA) adopt a coiled-coil conformation. Disordered regions lie at residues 2068 to 2112 (RPFV…EAAA), 2278 to 2303 (ATAEPTPPLNAEKSKKKTDASAPAAA), 2346 to 2389 (AAKG…PGAA), and 2441 to 2465 (LPLPPPGSPDGKKEKKDKKEAAGPT). The span at 2069–2083 (PFVPPPKPPGAPKRP) shows a compositional bias: pro residues. The span at 2087–2096 (AEEEEDEEGP) shows a compositional bias: acidic residues. Positions 2097–2112 (DTAAADAAAEAAEAAA) are enriched in low complexity. Residues 2378–2389 (SKQGPKSGPGAA) are compositionally biased toward low complexity. Basic and acidic residues predominate over residues 2450–2461 (DGKKEKKDKKEA). The TPR 7 repeat unit spans residues 2613 to 2646 (ATGGPCTGLLFLGVGRFAAHVPPAVLASAPLGGC).

This sequence belongs to the CFAP46 family. Part of the PDCP1 complex composed of CFAP46, CFAP54, CFAP74 and CFAP221; the PDCP1 complex binds calmodulin.

The protein resides in the cytoplasm. The protein localises to the cytoskeleton. It is found in the cilium axoneme. As part of the central apparatus of the cilium axoneme plays a role in cilium movement and thereby cell motility. The chain is Cilia- and flagella-associated protein 46 from Chlamydomonas reinhardtii (Chlamydomonas smithii).